Consider the following 430-residue polypeptide: Histidinol dehydrogenase (430 aa).

Positions 124, 185, and 208 each coordinate NAD(+). Substrate contacts are provided by serine 233, glutamine 255, and histidine 258. Positions 255 and 258 each coordinate Zn(2+). Active-site proton acceptor residues include glutamate 324 and histidine 325. Histidine 325, aspartate 358, glutamate 412, and histidine 418 together coordinate substrate. Aspartate 358 provides a ligand contact to Zn(2+). Histidine 418 serves as a coordination point for Zn(2+).

Belongs to the histidinol dehydrogenase family. The cofactor is Zn(2+).

It carries out the reaction L-histidinol + 2 NAD(+) + H2O = L-histidine + 2 NADH + 3 H(+). The protein operates within amino-acid biosynthesis; L-histidine biosynthesis; L-histidine from 5-phospho-alpha-D-ribose 1-diphosphate: step 9/9. Functionally, catalyzes the sequential NAD-dependent oxidations of L-histidinol to L-histidinaldehyde and then to L-histidine. This Leptospira biflexa serovar Patoc (strain Patoc 1 / Ames) protein is Histidinol dehydrogenase.